The following is a 472-amino-acid chain: Inactive CLIP domain-containing serine protease A3 (472 aa).

A run of 2 helical transmembrane segments spans residues 51–71 and 78–98; these read ISFV…WSSM and LPAL…HTYA. N-linked (GlcNAc...) asparagine glycosylation is found at Asn-122, Asn-133, Asn-149, and Asn-152. Residues 223 to 470 form the Peptidase S1 domain; it reads VAAAKAPAAG…YVPWITSTVS (248 aa). Cystine bridges form between Cys-354–Cys-428, Cys-386–Cys-408, and Cys-418–Cys-446.

This sequence belongs to the peptidase S1 family. CLIP subfamily. As to expression, expressed at highest levels in head and salivary gland. Expressed in ovary and carcass. Minimal expression in midgut.

The protein resides in the membrane. Its function is as follows. Probable inactive serine protease. Induces migration of cultured mouse embryonic fibroblasts. Functionally, (Microbial infection) Promotes dengue virus type 2 replication in the host. The sequence is that of Inactive CLIP domain-containing serine protease A3 from Aedes aegypti (Yellowfever mosquito).